A 287-amino-acid chain; its full sequence is Orotidine 5'-phosphate decarboxylase (287 aa).

Residue Lys-97 is the Proton donor of the active site.

This sequence belongs to the OMP decarboxylase family. Type 2 subfamily.

The catalysed reaction is orotidine 5'-phosphate + H(+) = UMP + CO2. Its pathway is pyrimidine metabolism; UMP biosynthesis via de novo pathway; UMP from orotate: step 2/2. The protein is Orotidine 5'-phosphate decarboxylase (pyrF) of Clostridium perfringens (strain 13 / Type A).